We begin with the raw amino-acid sequence, 668 residues long: UvrABC system protein B (668 aa).

The Helicase ATP-binding domain maps to 31-416 (QGITDGVPAQ…RGHIIEQIIR (386 aa)). 44–51 (GTTGSGKT) contributes to the ATP binding site. Positions 97-120 (YYDYYQPEAYIARSDTYIEKSLLI) match the Beta-hairpin motif. Positions 433–596 (QIDDLLEEIR…ITPQPIIKPI (164 aa)) constitute a Helicase C-terminal domain. The region spanning 621 to 656 (EASIKTYEEAMYQAAQEFQFDEAVKYRDLMNAAKKQ) is the UVR domain.

The protein belongs to the UvrB family. As to quaternary structure, forms a heterotetramer with UvrA during the search for lesions. Interacts with UvrC in an incision complex.

The protein localises to the cytoplasm. In terms of biological role, the UvrABC repair system catalyzes the recognition and processing of DNA lesions. A damage recognition complex composed of 2 UvrA and 2 UvrB subunits scans DNA for abnormalities. Upon binding of the UvrA(2)B(2) complex to a putative damaged site, the DNA wraps around one UvrB monomer. DNA wrap is dependent on ATP binding by UvrB and probably causes local melting of the DNA helix, facilitating insertion of UvrB beta-hairpin between the DNA strands. Then UvrB probes one DNA strand for the presence of a lesion. If a lesion is found the UvrA subunits dissociate and the UvrB-DNA preincision complex is formed. This complex is subsequently bound by UvrC and the second UvrB is released. If no lesion is found, the DNA wraps around the other UvrB subunit that will check the other stand for damage. The sequence is that of UvrABC system protein B from Chlamydia trachomatis serovar A (strain ATCC VR-571B / DSM 19440 / HAR-13).